The chain runs to 379 residues: Queuine tRNA-ribosyltransferase (379 aa).

Residue aspartate 94 is the Proton acceptor of the active site. Residues aspartate 94 to phenylalanine 98, aspartate 148, glutamine 191, and glycine 218 contribute to the substrate site. The interval glycine 249 to alanine 255 is RNA binding. Residue aspartate 268 is the Nucleophile of the active site. Positions threonine 273–arginine 277 are RNA binding; important for wobble base 34 recognition. 4 residues coordinate Zn(2+): cysteine 306, cysteine 308, cysteine 311, and histidine 337.

Belongs to the queuine tRNA-ribosyltransferase family. As to quaternary structure, homodimer. Within each dimer, one monomer is responsible for RNA recognition and catalysis, while the other monomer binds to the replacement base PreQ1. Zn(2+) serves as cofactor.

It catalyses the reaction 7-aminomethyl-7-carbaguanine + guanosine(34) in tRNA = 7-aminomethyl-7-carbaguanosine(34) in tRNA + guanine. It functions in the pathway tRNA modification; tRNA-queuosine biosynthesis. In terms of biological role, catalyzes the base-exchange of a guanine (G) residue with the queuine precursor 7-aminomethyl-7-deazaguanine (PreQ1) at position 34 (anticodon wobble position) in tRNAs with GU(N) anticodons (tRNA-Asp, -Asn, -His and -Tyr). Catalysis occurs through a double-displacement mechanism. The nucleophile active site attacks the C1' of nucleotide 34 to detach the guanine base from the RNA, forming a covalent enzyme-RNA intermediate. The proton acceptor active site deprotonates the incoming PreQ1, allowing a nucleophilic attack on the C1' of the ribose to form the product. After dissociation, two additional enzymatic reactions on the tRNA convert PreQ1 to queuine (Q), resulting in the hypermodified nucleoside queuosine (7-(((4,5-cis-dihydroxy-2-cyclopenten-1-yl)amino)methyl)-7-deazaguanosine). This Staphylococcus haemolyticus (strain JCSC1435) protein is Queuine tRNA-ribosyltransferase.